Consider the following 1079-residue polypeptide: Lon protease homolog, mitochondrial (1079 aa).

Residues 1 to 60 constitute a mitochondrion transit peptide; sequence MLRPRTYVRKLAWRCPRKSQLGLRLATSVSSHKSLPLPMNFDISHSQSAFRAYQDIIHRN. Residues 61–116 show a composition bias toward basic and acidic residues; that stretch reads KSVGDDEPSQRSENENNPSESDKDSNQDPETPKKDKESENDKEPEKEKDIENDNKV. Disordered regions lie at residues 61 to 158 and 262 to 285; these read KSVG…VDPV and LTTP…ESFP. Residues 117–131 are compositionally biased toward polar residues; sequence SSESNENVTLASSNT. The segment covering 132 to 143 has biased composition (low complexity); that stretch reads GGAAPPNGNNNG. The 227-residue stretch at 165–391 folds into the Lon N-terminal domain; it reads LLAIPMKDRP…RALELLKVEL (227 aa). Residues 262–281 are compositionally biased toward basic and acidic residues; that stretch reads LTTPSSEKEAKSEEPSKEDA. Residue 543–550 coordinates ATP; the sequence is GPPGTGKT. Residues 756 to 765 are compositionally biased toward basic and acidic residues; the sequence is ALDSSKEKEG. The disordered stretch occupies residues 756-832; that stretch reads ALDSSKEKEG…SEEDQQPEPK (77 aa). The segment covering 768-779 has biased composition (low complexity); sequence ASSEEANVNSES. A compositionally biased stretch (polar residues) spans 780–802; it reads TKSNTSQAEPVAESSTDISTKSK. The segment covering 803-818 has biased composition (basic and acidic residues); the sequence is VASEKIETKEKKETNK. One can recognise a Lon proteolytic domain in the interval 865 to 1053; sequence FPPPGVATGL…QEVFDKIFPN (189 aa). Catalysis depends on residues Ser959 and Lys1002.

The protein belongs to the peptidase S16 family. In terms of assembly, homohexamer or homoheptamer. Organized in a ring with a central cavity.

It localises to the mitochondrion matrix. The catalysed reaction is Hydrolysis of proteins in presence of ATP.. ATP-dependent serine protease that mediates the selective degradation of misfolded, unassembled or oxidatively damaged polypeptides as well as certain short-lived regulatory proteins in the mitochondrial matrix. May also have a chaperone function in the assembly of inner membrane protein complexes. Participates in the regulation of mitochondrial gene expression and in the maintenance of the integrity of the mitochondrial genome. Binds to mitochondrial DNA in a site-specific manner. This Debaryomyces hansenii (strain ATCC 36239 / CBS 767 / BCRC 21394 / JCM 1990 / NBRC 0083 / IGC 2968) (Yeast) protein is Lon protease homolog, mitochondrial.